A 333-amino-acid polypeptide reads, in one-letter code: Glycerol-3-phosphate dehydrogenase [NAD(P)+] (333 aa).

Positions 12, 33, and 105 each coordinate NADPH. Residues Lys-105, Gly-136, and Ser-138 each contribute to the sn-glycerol 3-phosphate site. Ala-140 lines the NADPH pocket. Residues Lys-191, Asp-244, Ser-254, Arg-255, and Asn-256 each contribute to the sn-glycerol 3-phosphate site. Lys-191 functions as the Proton acceptor in the catalytic mechanism. An NADPH-binding site is contributed by Arg-255. Positions 279 and 281 each coordinate NADPH.

The protein belongs to the NAD-dependent glycerol-3-phosphate dehydrogenase family.

The protein resides in the cytoplasm. It catalyses the reaction sn-glycerol 3-phosphate + NAD(+) = dihydroxyacetone phosphate + NADH + H(+). It carries out the reaction sn-glycerol 3-phosphate + NADP(+) = dihydroxyacetone phosphate + NADPH + H(+). It functions in the pathway membrane lipid metabolism; glycerophospholipid metabolism. Its function is as follows. Catalyzes the reduction of the glycolytic intermediate dihydroxyacetone phosphate (DHAP) to sn-glycerol 3-phosphate (G3P), the key precursor for phospholipid synthesis. The polypeptide is Glycerol-3-phosphate dehydrogenase [NAD(P)+] (Protochlamydia amoebophila (strain UWE25)).